Reading from the N-terminus, the 217-residue chain is THAP domain-containing protein 2 (217 aa).

Residues 1 to 80 form a THAP-type zinc finger; it reads MPTNCAAAGC…LKMDAVPTIF (80 aa). Residues 122 to 125 carry the HCFC1-binding motif (HBM) motif; sequence EHSY.

This is THAP domain-containing protein 2 (Thap2) from Mus musculus (Mouse).